The sequence spans 82 residues: Putative membrane protein insertion efficiency factor (82 aa).

This sequence belongs to the UPF0161 family.

The protein localises to the cell membrane. Could be involved in insertion of integral membrane proteins into the membrane. The polypeptide is Putative membrane protein insertion efficiency factor (Streptococcus uberis (strain ATCC BAA-854 / 0140J)).